A 411-amino-acid chain; its full sequence is NADH-quinone oxidoreductase subunit H (411 aa).

The next 9 membrane-spanning stretches (helical) occupy residues 18–38 (LAKS…AILI), 84–104 (WIYL…FAVI), 124–144 (LPVA…GIVL), 165–185 (VISY…YAGT), 198–218 (TWYI…MVGE), 260–280 (VSAL…PISI), 288–308 (WWPL…FMWL), 321–341 (MALG…IVAI), and 352–372 (APAT…ALLG).

This sequence belongs to the complex I subunit 1 family. As to quaternary structure, NDH-1 is composed of 14 different subunits. Subunits NuoA, H, J, K, L, M, N constitute the membrane sector of the complex.

It is found in the cell membrane. It catalyses the reaction a quinone + NADH + 5 H(+)(in) = a quinol + NAD(+) + 4 H(+)(out). NDH-1 shuttles electrons from NADH, via FMN and iron-sulfur (Fe-S) centers, to quinones in the respiratory chain. The immediate electron acceptor for the enzyme in this species is believed to be menaquinone. Couples the redox reaction to proton translocation (for every two electrons transferred, four hydrogen ions are translocated across the cytoplasmic membrane), and thus conserves the redox energy in a proton gradient. This subunit may bind ubiquinone. This is NADH-quinone oxidoreductase subunit H from Mycolicibacterium vanbaalenii (strain DSM 7251 / JCM 13017 / BCRC 16820 / KCTC 9966 / NRRL B-24157 / PYR-1) (Mycobacterium vanbaalenii).